The chain runs to 532 residues: O-phosphoserine--tRNA(Cys) ligase (532 aa).

Substrate is bound by residues 188-190 (HMT), 233-235 (SAS), 275-276 (YY), and Asn327.

It belongs to the class-II aminoacyl-tRNA synthetase family. O-phosphoseryl-tRNA(Cys) synthetase subfamily. In terms of assembly, homotetramer. Interacts with SepCysS.

The enzyme catalyses tRNA(Cys) + O-phospho-L-serine + ATP = O-phospho-L-seryl-tRNA(Cys) + AMP + diphosphate. Catalyzes the attachment of O-phosphoserine (Sep) to tRNA(Cys). This chain is O-phosphoserine--tRNA(Cys) ligase, found in Methanocella arvoryzae (strain DSM 22066 / NBRC 105507 / MRE50).